Here is a 340-residue protein sequence, read N- to C-terminus: MSDQRVIRAAAVQIAPDFERPGGTLDRVCAAIDEAASKGVQLIVFPETFVPYYPYFSFVRPPVASGADHMRLYEQAVVVPGPVTHAVSERARRHAMVVVLGVNERDHGSLYNTQLVFDIDGCQVLKRRKITPTFHERMIWGQGDAAGLKVARTGIARVGALACWEHYNPLARYALMTQHEEIHCSQFPGSLVGPIFAEQIEVTIRHHALESGCFVVNSTGWLSDAQIESVTTDPKLQKALRGGCMTAIVSPEGQHLAEPLREGEGMVVADLDMALITKRKRMMDSVGHYARPELLSLAINDRPAMPVVPMSMSFERAGADVAPEIISGGQDECQHEPVAG.

In terms of domain architecture, CN hydrolase spans 7–273 (IRAAAVQIAP…EGMVVADLDM (267 aa)). Glu-47 functions as the Proton acceptor in the catalytic mechanism. The active site involves Lys-129. Cys-163 acts as the Nucleophile in catalysis.

This sequence belongs to the carbon-nitrogen hydrolase superfamily. Nitrilase family. Forms oligomers.

It catalyses the reaction a nitrile + 2 H2O = a carboxylate + NH4(+). It carries out the reaction phenylpropanonitrile + 2 H2O = 3-phenylpropanoate + NH4(+). The catalysed reaction is an aliphatic nitrile + 2 H2O = a carboxylate + NH4(+). Highly resistant to various miscible cosolvents and tolerates high substrate concentrations. Its function is as follows. Catalyzes the hydrolysis of a broad range of nitriles to yield their corresponding carboxylic acid and ammonia. In vitro, shows high activity toward benzylic/unsaturated nitriles. The preferred substrate is trans-cinnamonitrile, followed by mono/di-cyanopyridines and aromatic substituted nitriles, with a moderate activity toward 3-phenylpropionitrile. Shows weaker activity toward the common dinitrile fumaronitrile. Also shows weak activity toward some aliphatic nitriles, including adiponitrile and glutaronitrile, and the arylacetonitrile 2-thiopheneacetonitrile. The polypeptide is Nitrilase (Paraburkholderia phymatum (strain DSM 17167 / CIP 108236 / LMG 21445 / STM815) (Burkholderia phymatum)).